We begin with the raw amino-acid sequence, 707 residues long: Elongation factor G (707 aa).

One can recognise a tr-type G domain in the interval 8-288; the sequence is QFTRNIGIMA…AVCKFLPSPA (281 aa). GTP contacts are provided by residues 17–24, 85–89, and 139–142; these read AHIDAGKT, DTPGH, and NKMD. A disordered region spans residues 288-308; sequence ADTPTVEGTDPSDPNKVIERK.

The protein belongs to the TRAFAC class translation factor GTPase superfamily. Classic translation factor GTPase family. EF-G/EF-2 subfamily.

The protein localises to the cytoplasm. Functionally, catalyzes the GTP-dependent ribosomal translocation step during translation elongation. During this step, the ribosome changes from the pre-translocational (PRE) to the post-translocational (POST) state as the newly formed A-site-bound peptidyl-tRNA and P-site-bound deacylated tRNA move to the P and E sites, respectively. Catalyzes the coordinated movement of the two tRNA molecules, the mRNA and conformational changes in the ribosome. This is Elongation factor G from Porphyromonas gingivalis (strain ATCC 33277 / DSM 20709 / CIP 103683 / JCM 12257 / NCTC 11834 / 2561).